The sequence spans 86 residues: Putative membrane protein insertion efficiency factor (86 aa).

Belongs to the UPF0161 family.

It localises to the cell membrane. Could be involved in insertion of integral membrane proteins into the membrane. This Streptococcus pyogenes serotype M1 protein is Putative membrane protein insertion efficiency factor.